Consider the following 161-residue polypeptide: Peptidyl-prolyl cis-trans isomerase-like 1 (161 aa).

Positions 1-155 (MATDVVFDTS…DEVKIIRAKV (155 aa)) constitute a PPIase cyclophilin-type domain.

It belongs to the cyclophilin-type PPIase family. PPIL1 subfamily.

The enzyme catalyses [protein]-peptidylproline (omega=180) = [protein]-peptidylproline (omega=0). Its function is as follows. PPIases accelerate the folding of proteins. It catalyzes the cis-trans isomerization of proline imidic peptide bonds in oligopeptides. This Aspergillus fumigatus (strain ATCC MYA-4609 / CBS 101355 / FGSC A1100 / Af293) (Neosartorya fumigata) protein is Peptidyl-prolyl cis-trans isomerase-like 1 (cyp1).